The primary structure comprises 277 residues: Bifunctional protein FolD (277 aa).

Residues 160–162 (GAS), S185, and I226 contribute to the NADP(+) site.

It belongs to the tetrahydrofolate dehydrogenase/cyclohydrolase family. Homodimer.

It carries out the reaction (6R)-5,10-methylene-5,6,7,8-tetrahydrofolate + NADP(+) = (6R)-5,10-methenyltetrahydrofolate + NADPH. The enzyme catalyses (6R)-5,10-methenyltetrahydrofolate + H2O = (6R)-10-formyltetrahydrofolate + H(+). The protein operates within one-carbon metabolism; tetrahydrofolate interconversion. In terms of biological role, catalyzes the oxidation of 5,10-methylenetetrahydrofolate to 5,10-methenyltetrahydrofolate and then the hydrolysis of 5,10-methenyltetrahydrofolate to 10-formyltetrahydrofolate. The chain is Bifunctional protein FolD from Vesicomyosocius okutanii subsp. Calyptogena okutanii (strain HA).